A 76-amino-acid polypeptide reads, in one-letter code: uncharacterized protein (76 aa).

This is an uncharacterized protein from Homo sapiens (Human).